A 527-amino-acid chain; its full sequence is D-3-phosphoglycerate dehydrogenase (527 aa).

NAD(+) is bound by residues 149–150 (RV), Asp-169, 228–230 (AAR), and Asp-254. Arg-230 is a catalytic residue. The active site involves Glu-259. Catalysis depends on His-278, which acts as the Proton donor. 278–281 (HIAA) serves as a coordination point for NAD(+). Positions 453–527 (YIISLHEDKP…GIIDATYVEL (75 aa)) constitute an ACT domain.

The protein belongs to the D-isomer specific 2-hydroxyacid dehydrogenase family.

The enzyme catalyses (2R)-3-phosphoglycerate + NAD(+) = 3-phosphooxypyruvate + NADH + H(+). The protein operates within amino-acid biosynthesis; L-serine biosynthesis; L-serine from 3-phospho-D-glycerate: step 1/3. The protein is D-3-phosphoglycerate dehydrogenase (serA) of Archaeoglobus fulgidus (strain ATCC 49558 / DSM 4304 / JCM 9628 / NBRC 100126 / VC-16).